The primary structure comprises 564 residues: Asparagine synthetase domain-containing protein CG17486 (564 aa).

The active-site Nucleophile is cysteine 2. The Glutamine amidotransferase type-2 domain occupies 2–180 (CGIFCSVVNN…PLGLFRVKLN (179 aa)). Residues 280–541 (PFCRLCMQKL…GLRDVVFLKK (262 aa)) form the Asparagine synthetase domain.

In Drosophila melanogaster (Fruit fly), this protein is Asparagine synthetase domain-containing protein CG17486.